We begin with the raw amino-acid sequence, 608 residues long: Albumin (608 aa).

The signal sequence occupies residues 1-18 (MKWVTFISLFFLFSSAYS). Residues 19–24 (RGLVRR) constitute a propeptide that is removed on maturation. 3 Albumin domains span residues 19–210 (RGLV…EALR), 211–403 (EKVL…EFKP), and 404–601 (LVDE…KLVA). Phosphoserine is present on Ser29. 2 residues coordinate Ca(2+): Glu30 and Asp37. An intrachain disulfide couples Cys77 to Cys86. 2 positions are modified to phosphoserine: Ser82 and Ser89. His91 provides a ligand contact to Zn(2+). 6 disulfides stabilise this stretch: Cys99–Cys115, Cys114–Cys125, Cys148–Cys193, Cys192–Cys201, Cys224–Cys270, and Cys269–Cys277. Lys229 is modified (N6-succinyllysine). Glu268 contacts Ca(2+). Zn(2+)-binding residues include His271 and Asp273. Asp273, Glu276, Asp279, and Asp283 together coordinate Ca(2+). Intrachain disulfides connect Cys289–Cys303, Cys302–Cys313, Cys340–Cys385, Cys384–Cys393, Cys416–Cys462, Cys461–Cys472, Cys485–Cys501, and Cys500–Cys511. Ser443 carries the phosphoserine modification. Residues Thr444 and Thr446 each carry the phosphothreonine modification. The residue at position 460 (Lys460) is an N6-succinyllysine. At Ser513 the chain carries Phosphoserine. Intrachain disulfides connect Cys538–Cys583 and Cys582–Cys591. Lys558 carries the post-translational modification N6-methyllysine. A Phosphothreonine modification is found at Thr570. Position 588 is an N6-succinyllysine (Lys588).

Belongs to the ALB/AFP/VDB family. In terms of assembly, interacts with FCGRT; this interaction regulates ALB homeostasis. Interacts with TASOR. In plasma, occurs in a covalently-linked complex with chromophore-bound alpha-1-microglobulin; this interaction does not prevent fatty acid binding to ALB. Phosphorylated by FAM20C in the extracellular medium. As to expression, plasma.

Its subcellular location is the secreted. In terms of biological role, binds water, Ca(2+), Na(+), K(+), fatty acids, hormones, bilirubin and drugs. Its main function is the regulation of the colloidal osmotic pressure of blood. Major zinc transporter in plasma, typically binds about 80% of all plasma zinc. Major calcium and magnesium transporter in plasma, binds approximately 45% of circulating calcium and magnesium in plasma. Potentially has more than two calcium-binding sites and might additionally bind calcium in a non-specific manner. The shared binding site between zinc and calcium at residue Asp-273 suggests a crosstalk between zinc and calcium transport in the blood. The rank order of affinity is zinc &gt; calcium &gt; magnesium. Binds to the bacterial siderophore enterobactin and inhibits enterobactin-mediated iron uptake of E.coli from ferric transferrin, and may thereby limit the utilization of iron and growth of enteric bacteria such as E.coli. Does not prevent iron uptake by the bacterial siderophore aerobactin. The polypeptide is Albumin (ALB) (Canis lupus familiaris (Dog)).